The following is a 474-amino-acid chain: tRNA-2-methylthio-N(6)-dimethylallyladenosine synthase (474 aa).

The region spanning 3–120 (KKLHIKTWGC…LPEMIEQVRR (118 aa)) is the MTTase N-terminal domain. [4Fe-4S] cluster is bound by residues C12, C49, C83, C157, C161, and C164. Residues 143–375 (RAEGPTAFVS…QDRITQQAMR (233 aa)) enclose the Radical SAM core domain. In terms of domain architecture, TRAM spans 378–441 (RHMMGTVQRI…TNSLRGKFIR (64 aa)).

It belongs to the methylthiotransferase family. MiaB subfamily. As to quaternary structure, monomer. Requires [4Fe-4S] cluster as cofactor.

Its subcellular location is the cytoplasm. The catalysed reaction is N(6)-dimethylallyladenosine(37) in tRNA + (sulfur carrier)-SH + AH2 + 2 S-adenosyl-L-methionine = 2-methylsulfanyl-N(6)-dimethylallyladenosine(37) in tRNA + (sulfur carrier)-H + 5'-deoxyadenosine + L-methionine + A + S-adenosyl-L-homocysteine + 2 H(+). Its function is as follows. Catalyzes the methylthiolation of N6-(dimethylallyl)adenosine (i(6)A), leading to the formation of 2-methylthio-N6-(dimethylallyl)adenosine (ms(2)i(6)A) at position 37 in tRNAs that read codons beginning with uridine. This chain is tRNA-2-methylthio-N(6)-dimethylallyladenosine synthase, found in Shewanella oneidensis (strain ATCC 700550 / JCM 31522 / CIP 106686 / LMG 19005 / NCIMB 14063 / MR-1).